We begin with the raw amino-acid sequence, 387 residues long: Phosphoglycerate kinase (387 aa).

Residues 21 to 23 (DLN), Arg-36, 59 to 62 (HLGR), Arg-113, and Arg-146 contribute to the substrate site. ATP contacts are provided by residues Lys-197, Glu-314, and 340–343 (GGDT).

The protein belongs to the phosphoglycerate kinase family. Monomer.

Its subcellular location is the cytoplasm. It catalyses the reaction (2R)-3-phosphoglycerate + ATP = (2R)-3-phospho-glyceroyl phosphate + ADP. It functions in the pathway carbohydrate degradation; glycolysis; pyruvate from D-glyceraldehyde 3-phosphate: step 2/5. This Cronobacter sakazakii (strain ATCC BAA-894) (Enterobacter sakazakii) protein is Phosphoglycerate kinase.